The primary structure comprises 275 residues: Formamidopyrimidine-DNA glycosylase (275 aa).

The active-site Schiff-base intermediate with DNA is the Pro-2. Residue Glu-3 is the Proton donor of the active site. Catalysis depends on Lys-59, which acts as the Proton donor; for beta-elimination activity. The DNA site is built by His-94 and Arg-113. The FPG-type zinc-finger motif lies at 241–275 (LVHTHAKEPCQICGTIIQKTKVNGRGTYYCPNCQN). Catalysis depends on Arg-265, which acts as the Proton donor; for delta-elimination activity.

This sequence belongs to the FPG family. In terms of assembly, monomer. Requires Zn(2+) as cofactor.

The enzyme catalyses Hydrolysis of DNA containing ring-opened 7-methylguanine residues, releasing 2,6-diamino-4-hydroxy-5-(N-methyl)formamidopyrimidine.. It carries out the reaction 2'-deoxyribonucleotide-(2'-deoxyribose 5'-phosphate)-2'-deoxyribonucleotide-DNA = a 3'-end 2'-deoxyribonucleotide-(2,3-dehydro-2,3-deoxyribose 5'-phosphate)-DNA + a 5'-end 5'-phospho-2'-deoxyribonucleoside-DNA + H(+). Functionally, involved in base excision repair of DNA damaged by oxidation or by mutagenic agents. Acts as a DNA glycosylase that recognizes and removes damaged bases. Has a preference for oxidized purines, such as 7,8-dihydro-8-oxoguanine (8-oxoG). Has AP (apurinic/apyrimidinic) lyase activity and introduces nicks in the DNA strand. Cleaves the DNA backbone by beta-delta elimination to generate a single-strand break at the site of the removed base with both 3'- and 5'-phosphates. The polypeptide is Formamidopyrimidine-DNA glycosylase (Ureaplasma parvum serovar 3 (strain ATCC 700970)).